We begin with the raw amino-acid sequence, 344 residues long: 3-isopropylmalate dehydrogenase (344 aa).

Substrate contacts are provided by R93, R103, R131, and D215. Mg(2+) contacts are provided by D215, D239, and D243. NAD(+) is bound at residue 273–285 (GSAPDIAGKGIAN).

It belongs to the isocitrate and isopropylmalate dehydrogenases family. LeuB type 1 subfamily. In terms of assembly, homodimer. Mg(2+) serves as cofactor. Requires Mn(2+) as cofactor.

It localises to the cytoplasm. The catalysed reaction is (2R,3S)-3-isopropylmalate + NAD(+) = 4-methyl-2-oxopentanoate + CO2 + NADH. The protein operates within amino-acid biosynthesis; L-leucine biosynthesis; L-leucine from 3-methyl-2-oxobutanoate: step 3/4. Its function is as follows. Catalyzes the oxidation of 3-carboxy-2-hydroxy-4-methylpentanoate (3-isopropylmalate) to 3-carboxy-4-methyl-2-oxopentanoate. The product decarboxylates to 4-methyl-2 oxopentanoate. The polypeptide is 3-isopropylmalate dehydrogenase (Streptococcus mutans serotype c (strain ATCC 700610 / UA159)).